The sequence spans 468 residues: ATP synthase subunit beta (468 aa).

148-155 (GGAGVGKT) contributes to the ATP binding site.

The protein belongs to the ATPase alpha/beta chains family. In terms of assembly, F-type ATPases have 2 components, CF(1) - the catalytic core - and CF(0) - the membrane proton channel. CF(1) has five subunits: alpha(3), beta(3), gamma(1), delta(1), epsilon(1). CF(0) has three main subunits: a(1), b(2) and c(9-12). The alpha and beta chains form an alternating ring which encloses part of the gamma chain. CF(1) is attached to CF(0) by a central stalk formed by the gamma and epsilon chains, while a peripheral stalk is formed by the delta and b chains.

Its subcellular location is the cell inner membrane. The catalysed reaction is ATP + H2O + 4 H(+)(in) = ADP + phosphate + 5 H(+)(out). Functionally, produces ATP from ADP in the presence of a proton gradient across the membrane. The catalytic sites are hosted primarily by the beta subunits. In Xanthomonas euvesicatoria pv. vesicatoria (strain 85-10) (Xanthomonas campestris pv. vesicatoria), this protein is ATP synthase subunit beta.